Reading from the N-terminus, the 645-residue chain is Serine/threonine-protein kinase BUR1 (645 aa).

Residues 55–379 (YREEEKLGQG…AMKAKKHPFF (325 aa)) enclose the Protein kinase domain. Residues 61 to 69 (LGQGTFGEV) and Lys84 contribute to the ATP site. Asp208 (proton acceptor) is an active-site residue. 3 disordered regions span residues 407-428 (EMNE…STDN), 442-513 (ASIP…KYPA), and 533-645 (RYRN…ADYY). Polar residues-rich tracts occupy residues 409-428 (NESM…STDN) and 457-474 (IPAQ…TQNI). Residues 477–486 (EPIPTAPLPK) show a composition bias toward pro residues. Positions 578 to 598 (NRYQNQDYNTSRNTGYNQYSQ) are enriched in polar residues.

The protein belongs to the protein kinase superfamily. CMGC Ser/Thr protein kinase family. CDC2/CDKX subfamily.

The protein localises to the nucleus. The enzyme catalyses L-seryl-[protein] + ATP = O-phospho-L-seryl-[protein] + ADP + H(+). The catalysed reaction is L-threonyl-[protein] + ATP = O-phospho-L-threonyl-[protein] + ADP + H(+). It carries out the reaction [DNA-directed RNA polymerase] + ATP = phospho-[DNA-directed RNA polymerase] + ADP + H(+). Functionally, serine/threonine-protein kinase involved in transcription regulation. Phosphorylates the UBC2/RAD6 ubiquitin-conjugating enzyme (E2), leading to monoubiquitination of histone H2B and the silencing of telomeric-associated genes. Also required for histone H3 methylation. Necessary for the recovery from pheromone-induced growth arrest in the cell cycle G1 phase. This Kluyveromyces lactis (strain ATCC 8585 / CBS 2359 / DSM 70799 / NBRC 1267 / NRRL Y-1140 / WM37) (Yeast) protein is Serine/threonine-protein kinase BUR1 (BUR1).